Reading from the N-terminus, the 120-residue chain is Large ribosomal subunit protein uL18 (120 aa).

The segment at Met1–Pro29 is disordered. Over residues Ala9 to Arg20 the composition is skewed to basic residues.

It belongs to the universal ribosomal protein uL18 family. As to quaternary structure, part of the 50S ribosomal subunit; part of the 5S rRNA/L5/L18/L25 subcomplex. Contacts the 5S and 23S rRNAs.

In terms of biological role, this is one of the proteins that bind and probably mediate the attachment of the 5S RNA into the large ribosomal subunit, where it forms part of the central protuberance. This Shouchella clausii (strain KSM-K16) (Alkalihalobacillus clausii) protein is Large ribosomal subunit protein uL18.